We begin with the raw amino-acid sequence, 289 residues long: Pseudouridine-5'-phosphate glycosidase (289 aa).

The active-site Proton donor is the glutamate 10. Residues lysine 71 and valine 91 each coordinate substrate. Residue aspartate 121 coordinates Mn(2+). 123-125 contributes to the substrate binding site; that stretch reads SQD. The active-site Nucleophile is the lysine 142.

The protein belongs to the pseudouridine-5'-phosphate glycosidase family. In terms of assembly, homotrimer. Requires Mn(2+) as cofactor.

The catalysed reaction is D-ribose 5-phosphate + uracil = psi-UMP + H2O. In terms of biological role, catalyzes the reversible cleavage of pseudouridine 5'-phosphate (PsiMP) to ribose 5-phosphate and uracil. Functions biologically in the cleavage direction, as part of a pseudouridine degradation pathway. This is Pseudouridine-5'-phosphate glycosidase from Kosmotoga olearia (strain ATCC BAA-1733 / DSM 21960 / TBF 19.5.1).